The chain runs to 300 residues: 2-keto-3-deoxy-L-fuconate dehydrogenase (300 aa).

NAD(+) contacts are provided by residues 63 to 90 (LITA…IATD) and Asp-112. Substrate is bound at residue Arg-198. The active-site Proton acceptor is the Tyr-201. NAD(+) contacts are provided by residues Lys-205 and 234–238 (IKTPS). Residues Arg-242 and Arg-260 each contribute to the substrate site.

It belongs to the short-chain dehydrogenases/reductases (SDR) family.

In terms of biological role, plays a role in the catabolism of L-fucose. Catalyzes the NAD(+)-dependent oxidation of 2-keo-3-deoxy-L-fuconate to 2,4-diketo-3-deoxy-L-fuconate. The protein is 2-keto-3-deoxy-L-fuconate dehydrogenase of Xanthomonas campestris pv. campestris (strain ATCC 33913 / DSM 3586 / NCPPB 528 / LMG 568 / P 25).